Consider the following 196-residue polypeptide: FAD-linked sulfhydryl oxidase ERV2 (196 aa).

The Cytoplasmic segment spans residues 1–12 (MKQIVKRSHAIR). The chain crosses the membrane as a helical; Signal-anchor span at residues 13–35 (IVAALGIIGLWMFFSSNELSIAT). At 36–196 (PGLIKAKSGI…SLEKEAKQHG (161 aa)) the chain is on the lumenal side. The 103-residue stretch at 72–174 (MGDDKVKKEV…YDCATILEDY (103 aa)) folds into the ERV/ALR sulfhydryl oxidase domain. Lysine 78, arginine 83, and tryptophan 86 together coordinate FAD. Cysteine 121 and cysteine 124 form a disulfide bridge. The FAD site is built by histidine 127, cysteine 150, histidine 153, asparagine 157, lysine 162, and tyrosine 174. A disulfide bridge links cysteine 150 with cysteine 167. Cysteine 176 and cysteine 178 are disulfide-bonded.

In terms of assembly, homodimer. Interacts with the substrate protein PDI1, forming transient intermolecular disulfide bridges. It depends on FAD as a cofactor.

The protein resides in the endoplasmic reticulum membrane. The enzyme catalyses 2 R'C(R)SH + O2 = R'C(R)S-S(R)CR' + H2O2. Its function is as follows. FAD-dependent sulfhydryl oxidase that catalyzes disulfide bond formation in the endoplasmic reticulum lumen in parallel to ERO1. The chain is FAD-linked sulfhydryl oxidase ERV2 (ERV2) from Saccharomyces cerevisiae (strain ATCC 204508 / S288c) (Baker's yeast).